We begin with the raw amino-acid sequence, 149 residues long: Transcriptional repressor NrdR (149 aa).

The segment at 3 to 34 (CPFCSATDTKVIDSRLVADGHQVRRRRECVQC) is a zinc-finger region. An ATP-cone domain is found at 49-139 (PRVVKQDGSR…VYRAFEDVSE (91 aa)).

The protein belongs to the NrdR family. Zn(2+) is required as a cofactor.

Negatively regulates transcription of bacterial ribonucleotide reductase nrd genes and operons by binding to NrdR-boxes. This chain is Transcriptional repressor NrdR, found in Shewanella pealeana (strain ATCC 700345 / ANG-SQ1).